A 103-amino-acid chain; its full sequence is Large ribosomal subunit protein bL21 (103 aa).

The protein belongs to the bacterial ribosomal protein bL21 family. As to quaternary structure, part of the 50S ribosomal subunit. Contacts protein L20.

In terms of biological role, this protein binds to 23S rRNA in the presence of protein L20. The chain is Large ribosomal subunit protein bL21 from Escherichia coli O127:H6 (strain E2348/69 / EPEC).